The chain runs to 167 residues: Single-stranded DNA-binding protein 2 (167 aa).

Residues 1–104 enclose the SSB domain; that stretch reads MLNRVVLVGR…VVCDSVQFLE (104 aa). Positions 107–167 are disordered; sequence NAQQNGGQRQ…IDISDDDLPF (61 aa). 2 stretches are compositionally biased toward low complexity: residues 109 to 118 and 132 to 147; these read QQNGGQRQQN and SGQN…TKQS. Residues 162–167 carry the Important for interaction with partner proteins motif; the sequence is DDDLPF.

Homotetramer.

Functionally, plays an important role in DNA replication, recombination and repair. Binds to ssDNA and to an array of partner proteins to recruit them to their sites of action during DNA metabolism. The sequence is that of Single-stranded DNA-binding protein 2 (ssb2) from Staphylococcus aureus (strain MSSA476).